The following is a 186-amino-acid chain: UPF0301 protein Swit_2673 (186 aa).

The protein belongs to the UPF0301 (AlgH) family.

The sequence is that of UPF0301 protein Swit_2673 from Rhizorhabdus wittichii (strain DSM 6014 / CCUG 31198 / JCM 15750 / NBRC 105917 / EY 4224 / RW1) (Sphingomonas wittichii).